We begin with the raw amino-acid sequence, 214 residues long: Adenylate kinase (214 aa).

10–15 (GAGKGT) lines the ATP pocket. Positions 30–59 (STGDMLRAAVKAGTELGKQAKEIMDAGKLV) are NMP. AMP contacts are provided by residues T31, R36, 57-59 (KLV), 85-88 (GFPR), and Q92. Residues 122–159 (GRRVHAASGRVYHVKFNPPKVEGKDDVTGEDLTIRKDD) form an LID region. ATP is bound by residues R123 and 132–133 (VY). Residues R156 and R167 each coordinate AMP. Residue R200 coordinates ATP.

Belongs to the adenylate kinase family. Monomer.

It is found in the cytoplasm. It carries out the reaction AMP + ATP = 2 ADP. The protein operates within purine metabolism; AMP biosynthesis via salvage pathway; AMP from ADP: step 1/1. Catalyzes the reversible transfer of the terminal phosphate group between ATP and AMP. Plays an important role in cellular energy homeostasis and in adenine nucleotide metabolism. The chain is Adenylate kinase from Pectobacterium carotovorum subsp. carotovorum (strain PC1).